The primary structure comprises 455 residues: Glutamyl-tRNA reductase (455 aa).

Substrate contacts are provided by residues 49–52, Ser-109, 114–116, and Gln-120; these read TCNR and EAQ. Cys-50 acts as the Nucleophile in catalysis. 190 to 195 provides a ligand contact to NADP(+); that stretch reads GAGAMG.

The protein belongs to the glutamyl-tRNA reductase family. Homodimer.

It catalyses the reaction (S)-4-amino-5-oxopentanoate + tRNA(Glu) + NADP(+) = L-glutamyl-tRNA(Glu) + NADPH + H(+). Its pathway is porphyrin-containing compound metabolism; protoporphyrin-IX biosynthesis; 5-aminolevulinate from L-glutamyl-tRNA(Glu): step 1/2. Catalyzes the NADPH-dependent reduction of glutamyl-tRNA(Glu) to glutamate 1-semialdehyde (GSA). In Salinispora arenicola (strain CNS-205), this protein is Glutamyl-tRNA reductase.